We begin with the raw amino-acid sequence, 122 residues long: Large ribosomal subunit protein uL14 (122 aa).

It belongs to the universal ribosomal protein uL14 family. In terms of assembly, part of the 50S ribosomal subunit. Forms a cluster with proteins L3 and L19. In the 70S ribosome, L14 and L19 interact and together make contacts with the 16S rRNA in bridges B5 and B8.

In terms of biological role, binds to 23S rRNA. Forms part of two intersubunit bridges in the 70S ribosome. The chain is Large ribosomal subunit protein uL14 from Ectopseudomonas mendocina (strain ymp) (Pseudomonas mendocina).